We begin with the raw amino-acid sequence, 340 residues long: Terpene synthase 29 (340 aa).

D132, E197, N257, S261, and E265 together coordinate Mg(2+). Positions 132-138 match the DDXXXXD motif motif; that stretch reads DEPDILE. The short motif at 257-265 is the NSE/DTE motif element; sequence NDILSFYKE.

The protein belongs to the trichodiene synthase family. It depends on Mg(2+) as a cofactor.

Functionally, terpene cyclase that catalyzes the cyclization of farnesyl diphosphate (FPP) to a single major terpene scaffold whose chemical structure is still unknown. The polypeptide is Terpene synthase 29 (Postia placenta (strain ATCC 44394 / Madison 698-R) (Brown rot fungus)).